A 329-amino-acid polypeptide reads, in one-letter code: DNA-directed RNA polymerase subunit alpha (329 aa).

Residues 1–235 are alpha N-terminal domain (alpha-NTD); sequence MQGSVTEFLK…EQLEAFVDLR (235 aa). Positions 249–329 are alpha C-terminal domain (alpha-CTD); it reads FDPILLRPVD…DWPPASIADE (81 aa).

Belongs to the RNA polymerase alpha chain family. In terms of assembly, homodimer. The RNAP catalytic core consists of 2 alpha, 1 beta, 1 beta' and 1 omega subunit. When a sigma factor is associated with the core the holoenzyme is formed, which can initiate transcription.

The catalysed reaction is RNA(n) + a ribonucleoside 5'-triphosphate = RNA(n+1) + diphosphate. DNA-dependent RNA polymerase catalyzes the transcription of DNA into RNA using the four ribonucleoside triphosphates as substrates. The chain is DNA-directed RNA polymerase subunit alpha from Salmonella choleraesuis (strain SC-B67).